The sequence spans 286 residues: Bifunctional protein FolD (286 aa).

NADP(+)-binding positions include 165–167 and S190; that span reads GRS.

The protein belongs to the tetrahydrofolate dehydrogenase/cyclohydrolase family. As to quaternary structure, homodimer.

The enzyme catalyses (6R)-5,10-methylene-5,6,7,8-tetrahydrofolate + NADP(+) = (6R)-5,10-methenyltetrahydrofolate + NADPH. The catalysed reaction is (6R)-5,10-methenyltetrahydrofolate + H2O = (6R)-10-formyltetrahydrofolate + H(+). Its pathway is one-carbon metabolism; tetrahydrofolate interconversion. Catalyzes the oxidation of 5,10-methylenetetrahydrofolate to 5,10-methenyltetrahydrofolate and then the hydrolysis of 5,10-methenyltetrahydrofolate to 10-formyltetrahydrofolate. This Staphylococcus aureus (strain bovine RF122 / ET3-1) protein is Bifunctional protein FolD.